A 360-amino-acid polypeptide reads, in one-letter code: Peptide chain release factor 1 (360 aa).

The residue at position 235 (Q235) is an N5-methylglutamine. The disordered stretch occupies residues A284–P313.

It belongs to the prokaryotic/mitochondrial release factor family. Post-translationally, methylated by PrmC. Methylation increases the termination efficiency of RF1.

The protein localises to the cytoplasm. Peptide chain release factor 1 directs the termination of translation in response to the peptide chain termination codons UAG and UAA. This is Peptide chain release factor 1 from Escherichia coli O127:H6 (strain E2348/69 / EPEC).